A 248-amino-acid chain; its full sequence is B-box zinc finger protein 24 (248 aa).

C5, C8, C28, H33, C57, C60, C80, and H85 together coordinate Zn(2+). Residues 5 to 47 (CDVCEKAPATVICCADEAALCPQCDIEIHAANKLASKHQRLHL) form a B box-type 1; atypical zinc finger. The B box-type 2; atypical zinc finger occupies 57-99 (CDICQEKAAFIFCVEDRALLCRDCDESIHVANSRSANHQRFLA). A disordered region spans residues 115–148 (IEKNQPEPSNNQQKANQIPAKSTSQQQQQPSSAT). Positions 120–130 (PEPSNNQQKAN) are enriched in polar residues. The span at 131–148 (QIPAKSTSQQQQQPSSAT) shows a compositional bias: low complexity. Positions 226 to 229 (KKPR) match the Nuclear localization signal motif. Residues 236 to 248 (DDDEEHFIVPDLG) form an interaction with COP1 region.

In terms of assembly, interacts with COP1 WD40 domain. Interacts with HY5 and HYH. Interacts with RCD1 and TRP4. Post-translationally, COP1-mediated ubiquitination and subsequent proteasomal degradation of BBX24/STO occurs in the dark. High expression in leaves and lower in roots and flowers.

The protein localises to the nucleus. In terms of biological role, acts as a negative regulator of seedling photomorphogenesis and light-regulated inhibition of hypocotyl elongation. BBX24/STO and BBX25/STH function as transcriptional corepressors of HY5 activity, leading to the down-regulation of BBX22 expression. BBX24/STO acts additively with BBX25/STH during de-etiolation and the hypocotyl shade avoidance response. Functions as a negative regulator of photomorphogenic UV-B responses by interacting with both COP1 and HY5. May act as a transcription factor in the salt-stress response. The chain is B-box zinc finger protein 24 from Arabidopsis thaliana (Mouse-ear cress).